The following is a 347-amino-acid chain: Globoside alpha-1,3-N-acetylgalactosaminyltransferase 1 (347 aa).

Topologically, residues methionine 1–arginine 5 are cytoplasmic. Residues leucine 6–tyrosine 26 traverse the membrane as a helical; Signal-anchor for type II membrane protein segment. The Lumenal portion of the chain corresponds to methionine 27–serine 347. Residue asparagine 108 is glycosylated (N-linked (GlcNAc...) asparagine). Residues phenylalanine 116–tyrosine 121, aspartate 206–aspartate 208, and histidine 228–tyrosine 231 each bind substrate. Residues aspartate 206 and aspartate 208 each contribute to the Mn(2+) site. Catalysis depends on glutamate 298, which acts as the Nucleophile.

Belongs to the glycosyltransferase 6 family. Mn(2+) is required as a cofactor.

It localises to the golgi apparatus membrane. It catalyses the reaction a globoside Gb4Cer (d18:1(4E)) + UDP-N-acetyl-alpha-D-galactosamine = a globoside Forssman (d18:1(4E)) + UDP + H(+). The catalysed reaction is a globoside Gb4Cer + UDP-N-acetyl-alpha-D-galactosamine = a globoside IV3GalNAc-Gb4Cer + UDP + H(+). The protein operates within protein modification; protein glycosylation. Catalyzes the formation of Forssman glycolipid via the addition of N-acetylgalactosamine (GalNAc) in alpha-1,3-linkage to GalNAcb-1,3Gala-1,4Galb-1,4GlcCer (Gb4Cer). Forssman glycolipid (also called Forssman antigen; FG) probably serves for adherence of some pathogens such as E.coli uropathogenic strains. The sequence is that of Globoside alpha-1,3-N-acetylgalactosaminyltransferase 1 from Canis lupus familiaris (Dog).